The primary structure comprises 72 residues: Cell division protein ZapB (72 aa).

Residues Ile5–Asn71 are a coiled coil.

The protein belongs to the ZapB family. In terms of assembly, homodimer. The ends of the coiled-coil dimer bind to each other, forming polymers. Interacts with FtsZ.

It is found in the cytoplasm. Functionally, non-essential, abundant cell division factor that is required for proper Z-ring formation. It is recruited early to the divisome by direct interaction with FtsZ, stimulating Z-ring assembly and thereby promoting cell division earlier in the cell cycle. Its recruitment to the Z-ring requires functional FtsA or ZipA. The sequence is that of Cell division protein ZapB from Actinobacillus pleuropneumoniae serotype 5b (strain L20).